Consider the following 371-residue polypeptide: Protein STRICTOSIDINE SYNTHASE-LIKE 7 (371 aa).

A signal peptide spans 1–25; sequence MPVLFSSRSLILSIIVPLLISIALY. 3 N-linked (GlcNAc...) asparagine glycosylation sites follow: Asn-101, Asn-137, and Asn-285. A Phosphotyrosine modification is found at Tyr-303.

This sequence belongs to the strictosidine synthase family.

It localises to the vacuole. The chain is Protein STRICTOSIDINE SYNTHASE-LIKE 7 from Arabidopsis thaliana (Mouse-ear cress).